We begin with the raw amino-acid sequence, 415 residues long: Corticotropin-releasing factor receptor 1 (415 aa).

The signal sequence occupies residues 1–23; sequence MGRRPQLRLVKALLLLGLNSISA. The Extracellular segment spans residues 24-111; sequence SLQDQHCESL…CQEILSEGEK (88 aa). Disulfide bonds link Cys30–Cys54, Cys44–Cys87, and Cys68–Cys102. N-linked (GlcNAc...) asparagine glycosylation is found at Asn38, Asn45, Asn51, Asn78, Asn90, and Asn98. The important for peptide agonist binding stretch occupies residues 99–108; it reads HSECQEILSE. Residues 112 to 142 form a helical membrane-spanning segment; sequence SKAHYHIAVIINYLGHCISLAALLVAFVLFL. The Cytoplasmic portion of the chain corresponds to 143–149; that stretch reads RLRSIRC. Residues 150-174 traverse the membrane as a helical segment; it reads VRNIIHWNLISAFILRNATWFVVQL. Residues 175–189 are Extracellular-facing; sequence TMSPEVHQSNVGWCR. Cys188 and Cys258 form a disulfide bridge. A helical membrane pass occupies residues 190 to 218; that stretch reads LVTAAYNYFHVTNFFWMFGEGCYLHTAVV. The Cytoplasmic portion of the chain corresponds to 219–225; sequence LTYSTDR. The helical transmembrane segment at 226–253 threads the bilayer; sequence LRKWMFICIGWGVPFPIIVAWAIGKLYY. The Extracellular portion of the chain corresponds to 254 to 269; sequence DNEKCWFGKRPGVYTD. The chain crosses the membrane as a helical span at residues 270-295; it reads YIYQGPMILVLLINFIFLFNIVRILM. An important for antagonist binding region spans residues 280–290; sequence LLINFIFLFNI. Topologically, residues 296-306 are cytoplasmic; that stretch reads TKLRASTTSET. Ser301 carries the post-translational modification Phosphoserine; by PKA. Residues 307–331 traverse the membrane as a helical segment; the sequence is IQYRKAVKATLVLLPLLGITYMLFF. The Extracellular segment spans residues 332–338; sequence VNPGEDE. The chain crosses the membrane as a helical span at residues 339-368; it reads VSRVVFIYFNSFLESFQGFFVSVFYCFLNS. Topologically, residues 369–415 are cytoplasmic; it reads EVRSAIRKRWHRWQDKHSIRARVARAMSIPTSPTRVSFHSIKQSTAV.

This sequence belongs to the G-protein coupled receptor 2 family. In terms of assembly, heterodimer; heterodimerizes with GPER1. Interacts (via N-terminal extracellular domain) with CRH and UCN. Interacts with DLG1; this inhibits endocytosis of CRHR1 after agonist binding. Post-translationally, C-terminal Ser or Thr residues may be phosphorylated. Phosphorylation at Ser-301 by PKA prevents maximal coupling to Gq-protein, and thereby negatively regulates downstream signaling.

The protein localises to the cell membrane. The protein resides in the endosome. In terms of biological role, G-protein coupled receptor for CRH (corticotropin-releasing factor) and UCN (urocortin). Has high affinity for CRH and UCN. Ligand binding causes a conformation change that triggers signaling via guanine nucleotide-binding proteins (G proteins) and down-stream effectors, such as adenylate cyclase. Promotes the activation of adenylate cyclase, leading to increased intracellular cAMP levels. Inhibits the activity of the calcium channel CACNA1H. Required for normal embryonic development of the adrenal gland and for normal hormonal responses to stress. Plays a role in the response to anxiogenic stimuli. This Ovis aries (Sheep) protein is Corticotropin-releasing factor receptor 1 (CRHR1).